The primary structure comprises 744 residues: Collagen alpha-1(VIII) chain (744 aa).

The first 27 residues, 1–27, serve as a signal peptide directing secretion; sequence MAVLPGPLQLLGVLLTISLSSIRLIQA. The tract at residues 29 to 117 is nonhelical region (NC2); sequence AYYGIKPLPP…GKEIPLASLR (89 aa). Disordered regions lie at residues 115–393 and 459–589; these read SLRG…GEPG and GPKG…PDMG. The interval 118 to 571 is triple-helical region (COL1); the sequence is GEQGPRGEPG…PGPPGPPGPP (454 aa). Pro residues predominate over residues 128–137; it reads PRGPPGPPGL. Positions 168–178 are enriched in low complexity; the sequence is KPGAMGMPGAK. Gly residues-rich tracts occupy residues 203 to 217 and 328 to 337; these read GLPG…GLPG and GFPGGKGEQG. 2 stretches are compositionally biased toward low complexity: residues 466-496 and 538-556; these read QKGV…LQGP and AGLH…QGQP. Pro residues predominate over residues 558–581; it reads LPGPPGPPGPPGPPAVMPPTPPPQ. Residues 572–744 form a nonhelical region (NC1) region; it reads AVMPPTPPPQ…SFSGYLLYPM (173 aa). In terms of domain architecture, C1q spans 611-744; that stretch reads PAYEMPAFTA…SFSGYLLYPM (134 aa).

Homotrimers, or heterotrimers in association with alpha 2(VIII) type collagens. Four homotrimers can form a tetrahedron stabilized by central interacting C-terminal NC1 trimers. In terms of processing, prolines at the third position of the tripeptide repeating unit (G-X-Y) are hydroxylated in some or all of the chains. Post-translationally, proteolytically cleaved by neutrophil elastase, in vitro. Proteolytic processing produces the C-terminal NC1 domain fragment, vastatin. In terms of tissue distribution, expressed primarily in the subendothelium of large blood vessels. Also expressed in arterioles and venules in muscle, heart, kidney, spleen, umbilical cord, liver and lung and is also found in connective tissue layers around hair follicles, around nerve bundles in muscle, in the dura of the optic nerve, in cornea and sclera, and in the perichondrium of cartilaginous tissues. In the kidney, expressed in mesangial cells, glomerular endothelial cells, and tubular epithelial cells. Also expressed in mast cells, and in astrocytes during the repair process. Expressed in Descemet's membrane. Specifically expressed in peritoneal fibroblasts and mesothelial cells.

The protein resides in the secreted. It is found in the extracellular space. It localises to the extracellular matrix. Its subcellular location is the basement membrane. Its function is as follows. Macromolecular component of the subendothelium. Major component of the Descemet's membrane (basement membrane) of corneal endothelial cells. Also a component of the endothelia of blood vessels. Necessary for migration and proliferation of vascular smooth muscle cells and thus, has a potential role in the maintenance of vessel wall integrity and structure, in particular in atherogenesis. Vastatin, the C-terminal fragment comprising the NC1 domain, inhibits aortic endothelial cell proliferation and causes cell apoptosis. This chain is Collagen alpha-1(VIII) chain (COL8A1), found in Homo sapiens (Human).